A 247-amino-acid polypeptide reads, in one-letter code: Trypsin (247 aa).

The signal sequence occupies residues 1–21; it reads LTTVISYFALVAFALVGVSYA. The propeptide at 22-30 is activation peptide; the sequence is TPKASINGR. Residues 31-247 enclose the Peptidase S1 domain; sequence IVGGEMTDIS…QSNFPGVYGI (217 aa). Cysteine 61 and cysteine 77 are disulfide-bonded. Active-site charge relay system residues include histidine 76 and aspartate 120. 2 disulfide bridges follow: cysteine 185-cysteine 201 and cysteine 212-cysteine 236. The Charge relay system role is filled by serine 216.

This sequence belongs to the peptidase S1 family. As to expression, midgut.

The protein localises to the secreted. It localises to the extracellular space. It carries out the reaction Preferential cleavage: Arg-|-Xaa, Lys-|-Xaa.. The polypeptide is Trypsin (Simulium vittatum (Striped black fly)).